The following is a 348-amino-acid chain: Dihydroorotase (348 aa).

Zn(2+) is bound by residues H17 and H19. Residues 19 to 21 and N45 contribute to the substrate site; that span reads HLR. Residues K103, H140, and H178 each contribute to the Zn(2+) site. K103 carries the post-translational modification N6-carboxylysine. Position 140 (H140) interacts with substrate. L223 contributes to the substrate binding site. D251 is a Zn(2+) binding site. The active site involves D251. 2 residues coordinate substrate: H255 and A267.

This sequence belongs to the metallo-dependent hydrolases superfamily. DHOase family. Class II DHOase subfamily. Homodimer. Requires Zn(2+) as cofactor.

It catalyses the reaction (S)-dihydroorotate + H2O = N-carbamoyl-L-aspartate + H(+). Its pathway is pyrimidine metabolism; UMP biosynthesis via de novo pathway; (S)-dihydroorotate from bicarbonate: step 3/3. Functionally, catalyzes the reversible cyclization of carbamoyl aspartate to dihydroorotate. This is Dihydroorotase from Escherichia coli O6:K15:H31 (strain 536 / UPEC).